A 133-amino-acid polypeptide reads, in one-letter code: Large ribosomal subunit protein bL21 (133 aa).

The tract at residues 1 to 22 (MAEKPAAKPKAAAAKAEAKDQS) is disordered.

This sequence belongs to the bacterial ribosomal protein bL21 family. Part of the 50S ribosomal subunit. Contacts protein L20.

This protein binds to 23S rRNA in the presence of protein L20. In Prochlorococcus marinus (strain MIT 9303), this protein is Large ribosomal subunit protein bL21.